A 669-amino-acid chain; its full sequence is Glycerol uptake/efflux facilitator protein (669 aa).

The segment covering 1–16 (MSNPQKALNDFLSSES) has biased composition (polar residues). Disordered stretches follow at residues 1-99 (MSNP…TYVP) and 123-147 (QDINHKDNGPPSASSNRAFRPRGQT). Topologically, residues 1 to 254 (MSNPQKALND…WSSVKNTYLK (254 aa)) are extracellular. Residues 50–68 (NNNNNNNNNNNNSNNNNNG) are compositionally biased toward low complexity. Positions 72–81 (GNDDDYDYEM) are enriched in acidic residues. Composition is skewed to polar residues over residues 87–99 (SPQSARPTPTYVP) and 133–147 (PSASSNRAFRPRGQT). Ser-150 is modified (phosphoserine). Positions 167-215 (HTIPESHLSRRRSRSRATSNAGHSANTGATNGRTTGAQTNMESNESPRN) are disordered. At Thr-168 the chain carries Phosphothreonine. Residues 191 to 206 (ANTGATNGRTTGAQTN) are compositionally biased toward low complexity. 2 positions are modified to phosphoserine: Ser-209 and Ser-212. Residues 255 to 275 (EFLAEFMGTMVMIIFGSAVVC) form a helical membrane-spanning segment. Over 276-325 (QVNVAGKIQQDNFNVALDNLNVTGSSAETIDAMKSLTSLVSSVAGGTFDD) the chain is Cytoplasmic. Residues 326-346 (VALGWAAAVVMGYFCAGGSAI) traverse the membrane as a helical segment. The Extracellular segment spans residues 347 to 369 (SGAHLNPSITLANLVYRGFPLKK). The NPA 1 signature appears at 352 to 354 (NPS). A helical transmembrane segment spans residues 370–390 (VPYYFAGQLIGAFTGALILFI). The Cytoplasmic portion of the chain corresponds to 391–446 (WYKRVLQEAYSDWWMNESVAGMFCVFPKPYLSSGRQFFSEFLCGAMLQAGTFALTD). A helical membrane pass occupies residues 447-467 (PYTCLSSDVFPLMMFILIFII). Residues 468-506 (NASMAYQTGTAMNLARDLGPRLALYAVGFDHKMLWVHHH) are Extracellular-facing. Positions 480–482 (NLA) match the NPA 2 motif. A helical membrane pass occupies residues 507 to 527 (HFFWVPMVGPFIGALMGGLVY). Topologically, residues 528 to 669 (DVCIYQGHES…SHYGNAKKVT (142 aa)) are cytoplasmic. Disordered stretches follow at residues 591 to 615 (LQKTKTKSSISDNENEAGEKKVQFK) and 635 to 669 (DSIETASLGATTTDSIGLSDTSSEDSHYGNAKKVT). The segment covering 638 to 655 (ETASLGATTTDSIGLSDT) has biased composition (polar residues).

Belongs to the MIP/aquaporin (TC 1.A.8) family.

It is found in the membrane. In terms of biological role, channel protein for glycerol. Has a role in both glycerol influx and efflux. Plays a role in osmoregulation: under osmotic stress the channel is apparently closed to allow accumulation of glycerol in the cell under hyperosmotic conditions. In Saccharomyces cerevisiae (strain ATCC 204508 / S288c) (Baker's yeast), this protein is Glycerol uptake/efflux facilitator protein (FPS1).